Reading from the N-terminus, the 253-residue chain is 2-dehydro-3-deoxy-D-gluconate 5-dehydrogenase (253 aa).

Residue 14-38 (VVTGCDTGLGQGMALGLAQAGCDIV) participates in NAD(+) binding. S145 provides a ligand contact to substrate. The active-site Proton acceptor is Y158.

This sequence belongs to the short-chain dehydrogenases/reductases (SDR) family. As to quaternary structure, homotetramer.

The catalysed reaction is 2-dehydro-3-deoxy-D-gluconate + NAD(+) = 3-deoxy-D-glycero-2,5-hexodiulosonate + NADH + H(+). The enzyme catalyses 4-pregnen-20,21-diol-3-one + NAD(+) = 21-hydroxyprogesterone + NADH + H(+). Its function is as follows. Catalyzes the reversible reduction of 2,5-diketo-3-deoxygluconate (DKII or 4,6-dihydroxy-2,5-dioxohexanoate) into 2-keto-3-deoxygluconate (KDG or 2-dehydro-3-deoxygluconate) with a concomitant oxidation of NADH. To a lesser extent, can also reduce 5-keto-D-gluconate and oxidize D-gluconate and 1,2-propanediol. Together with KduI, seems to play a role in the catabolism of hexuronates under osmotic stress conditions, substituting for the regular hexuronate degrading enzymes UxaABC and UxuAB whose expression is repressed in these conditions. In vitro, also exhibits NADH-dependent 20-ketosteroid reductase activity against eukaryotic steroid hormone 11-deoxycorticosterone (11-DOC), which is converted into the product 4-pregnen-20,21-diol-3-one. In addition to 11-DOC, five other C21 steroid compounds (11-deoxycortisol, cortisol, corticosterone, cortisone, and 21-hydroxypregnenolone) are reduced by KduD, but steroids lacking the hydroxyl group at C21 position, such as pregnenolone, testosterone propionate, cortisone acetate, or progesterone, cannot be used as substrate. The chain is 2-dehydro-3-deoxy-D-gluconate 5-dehydrogenase from Escherichia coli (strain K12).